The primary structure comprises 55 residues: Metallothionein-3 (55 aa).

It belongs to the metallothionein superfamily. Type 11 family.

The chain is Metallothionein-3 (MTP3) from Yarrowia lipolytica (strain CLIB 122 / E 150) (Yeast).